A 227-amino-acid polypeptide reads, in one-letter code: Transcription elongation factor A protein-like 2 (227 aa).

2 disordered regions span residues 1 to 145 (MEKL…TNKG) and 202 to 227 (FYPRGPREFRGGCRAPRRDTEDIPYV). 5 stretches are compositionally biased toward basic and acidic residues: residues 18–43 (IDNEEQPPHEGKPEVACILEDKKLEN), 50–82 (TGKRVEEPLKDKEKPESAGKAKGEGKSERKGKS), 90–113 (TEGKPERGGRAEGEGEPDSEREPE), 120–136 (SETRAAGKRPAEDDIPR), and 206–227 (GPREFRGGCRAPRRDTEDIPYV).

The protein belongs to the TFS-II family. TFA subfamily.

It is found in the nucleus. May be involved in transcriptional regulation. The protein is Transcription elongation factor A protein-like 2 (TCEAL2) of Homo sapiens (Human).